Reading from the N-terminus, the 132-residue chain is Small ribosomal subunit protein uS9 (132 aa).

This sequence belongs to the universal ribosomal protein uS9 family.

This is Small ribosomal subunit protein uS9 from Leptospira interrogans serogroup Icterohaemorrhagiae serovar copenhageni (strain Fiocruz L1-130).